Reading from the N-terminus, the 242-residue chain is Urease accessory protein UreF (242 aa).

It belongs to the UreF family. In terms of assembly, ureD, UreF and UreG form a complex that acts as a GTP-hydrolysis-dependent molecular chaperone, activating the urease apoprotein by helping to assemble the nickel containing metallocenter of UreC. The UreE protein probably delivers the nickel.

The protein localises to the cytoplasm. In terms of biological role, required for maturation of urease via the functional incorporation of the urease nickel metallocenter. In Bradyrhizobium diazoefficiens (strain JCM 10833 / BCRC 13528 / IAM 13628 / NBRC 14792 / USDA 110), this protein is Urease accessory protein UreF.